The primary structure comprises 514 residues: 2,3-bisphosphoglycerate-independent phosphoglycerate mutase (514 aa).

2 residues coordinate Mn(2+): Asp14 and Ser64. Residue Ser64 is the Phosphoserine intermediate of the active site. Residues His125, Arg155–Asp156, Arg187, Arg193, Arg263–Arg266, and Lys337 each bind substrate. Mn(2+)-binding residues include Asp404, His408, Asp445, His446, and His463.

This sequence belongs to the BPG-independent phosphoglycerate mutase family. As to quaternary structure, monomer. Requires Mn(2+) as cofactor.

It catalyses the reaction (2R)-2-phosphoglycerate = (2R)-3-phosphoglycerate. Its pathway is carbohydrate degradation; glycolysis; pyruvate from D-glyceraldehyde 3-phosphate: step 3/5. In terms of biological role, catalyzes the interconversion of 2-phosphoglycerate and 3-phosphoglycerate. This Hahella chejuensis (strain KCTC 2396) protein is 2,3-bisphosphoglycerate-independent phosphoglycerate mutase.